The chain runs to 136 residues: Nuclear receptor 2C2-associated protein (136 aa).

The protein belongs to the NR2C2AP family.

It localises to the nucleus. May act as a repressor of nr2c2-mediated transactivation by suppressing the binding between nr2c2 and its response element in target genes. The sequence is that of Nuclear receptor 2C2-associated protein (nr2c2ap) from Xenopus laevis (African clawed frog).